A 446-amino-acid polypeptide reads, in one-letter code: Adenylosuccinate synthetase (446 aa).

Residues 20–26 (GDEGKGK) and 48–50 (GHT) each bind GTP. D21 acts as the Proton acceptor in catalysis. Positions 21 and 48 each coordinate Mg(2+). Residues 21–24 (DEGK), 46–49 (NAGH), T137, R151, Q232, T247, and R319 each bind IMP. The active-site Proton donor is the H49. Position 315 to 321 (315 to 321 (SVTGRPR)) interacts with substrate. GTP is bound by residues R321, 347–349 (KLD), and 429–431 (STG).

This sequence belongs to the adenylosuccinate synthetase family. In terms of assembly, homodimer. Requires Mg(2+) as cofactor.

The protein resides in the cytoplasm. It carries out the reaction IMP + L-aspartate + GTP = N(6)-(1,2-dicarboxyethyl)-AMP + GDP + phosphate + 2 H(+). It functions in the pathway purine metabolism; AMP biosynthesis via de novo pathway; AMP from IMP: step 1/2. Plays an important role in the de novo pathway of purine nucleotide biosynthesis. Catalyzes the first committed step in the biosynthesis of AMP from IMP. The chain is Adenylosuccinate synthetase from Ralstonia pickettii (strain 12J).